The sequence spans 1423 residues: Autophagy-related protein 11 (1423 aa).

2 coiled-coil regions span residues 551–589 (DDEL…QSQA) and 625–978 (SEGT…ASEL). Disordered stretches follow at residues 583–660 (LHRQ…SNRA) and 1028–1048 (RAER…SLRK). Residues 585 to 602 (RQSQASRPGNLFQPQTNS) show a composition bias toward polar residues. Residues 631-648 (LLRRISELENELREEKQR) are compositionally biased toward basic and acidic residues. Polar residues-rich tracts occupy residues 650–660 (SRIQNDLSNRA) and 1034–1047 (QNPN…TSLR). Residues 1102–1130 (HRIKEVEHKARKWQKEARSYRDRAHIAQK) are a coiled coil. The disordered stretch occupies residues 1327–1423 (SLRAAAPETP…DYTYESPGKK (97 aa)). The span at 1383–1395 (KTAEPRRMLDRQE) shows a compositional bias: basic and acidic residues.

It belongs to the ATG11 family. As to quaternary structure, homodimer and potential homooligomers. Interacts with ATG1 kinase and the ATG19 and ATG34 cargo protein transporters. Interacts with ATG9, ATG17 and ATG20.

The protein resides in the preautophagosomal structure membrane. The protein localises to the vacuole membrane. In terms of biological role, involved in cytoplasm to vacuole transport (Cvt), pexophagy, mitophagy and nucleophagy. Recruits mitochondria for their selective degradation via autophagy (mitophagy) during starvation, through its interaction with ATG32. Works as scaffold proteins that recruit ATG proteins to the pre-autophagosome (PAS), the site of vesicle/autophagosome formation. Required for ATG9 anterograde transport from the mitochondria to the PAS. Also recruits the ATG19-prAPE1 complex to the PAS. Required for the Cvt vesicles completion. Plays a role in morphological differentiation and cephalosporin production. The chain is Autophagy-related protein 11 from Hapsidospora chrysogena (Acremonium chrysogenum).